The following is a 2475-amino-acid chain: Gellan lyase (2475 aa).

The N-terminal stretch at 1 to 35 (MRFSWKKLVSAALVMALLVGIVYPAASGRGAVASA) is a signal peptide. Positions 623-708 (APANVQVAIS…QPATATSPGE (86 aa)) constitute a Fibronectin type-III domain. Positions 1295–1518 (GAFSLTIDDN…RDQIWVGRYG (224 aa)) constitute a NodB homology domain. The Cohesin domain maps to 2111-2223 (QPGQQLELTV…VSTAVSLSDF (113 aa)).

Subject to proteolytic processing after secretion. Cleavage occurs between Gly-1205 and Leu-1206. This gives rise to a N-terminal gellan lyase of 130 kDa being the mature form of the gellan lyase. The function of C-terminal gellan lyase is not known.

Its subcellular location is the secreted. The catalysed reaction is Eliminative cleavage of beta-D-glucopyranosyl-(1-&gt;4)-beta-D-glucopyranosyluronate bonds of gellan backbone releasing tetrasaccharides containing a 4-deoxy-4,5-unsaturated D-glucopyranosyluronic acid at the non-reducing end. The tetrasaccharide produced from deacetylated gellan is beta-D-4-deoxy-Delta(4)-GlcAp-(1-&gt;4)-beta-D-Glcp-(1-&gt;4)-alpha-L-Rhap-(1-&gt;3)-beta-D-Glcp.. In terms of biological role, cleaves the glycosidic bonds of gellan backbone and releases tetrasaccharide units of glucuronyl-glucosyl-rhamnosyl-glucose with unsaturated glucuronic acid at the non-reducing terminal. The enzyme is highly specific to the heteropolysaccharide gellan, especially deacetylated gellan. The chain is Gellan lyase from Bacillus sp.